A 317-amino-acid polypeptide reads, in one-letter code: Glucose-6-phosphate isomerase, cytosolic 2B (317 aa).

Glutamate 108 functions as the Proton donor in the catalytic mechanism. Active-site residues include histidine 139 and lysine 264.

Belongs to the GPI family. In terms of assembly, homodimer.

It is found in the cytoplasm. It catalyses the reaction alpha-D-glucose 6-phosphate = beta-D-fructose 6-phosphate. It participates in carbohydrate degradation; glycolysis; D-glyceraldehyde 3-phosphate and glycerone phosphate from D-glucose: step 2/4. This chain is Glucose-6-phosphate isomerase, cytosolic 2B (PGIC2-B), found in Clarkia lewisii (Farewell-to-spring).